Consider the following 509-residue polypeptide: Steroid 17-alpha-hydroxylase/17,20 lyase (509 aa).

Residue Asn-202 coordinates substrate. Cys-442 is a binding site for heme.

This sequence belongs to the cytochrome P450 family. Heme is required as a cofactor.

The protein resides in the endoplasmic reticulum membrane. It localises to the microsome membrane. It carries out the reaction a C21-steroid + reduced [NADPH--hemoprotein reductase] + O2 = a 17alpha-hydroxy-C21-steroid + oxidized [NADPH--hemoprotein reductase] + H2O + H(+). The catalysed reaction is progesterone + reduced [NADPH--hemoprotein reductase] + O2 = 17alpha-hydroxyprogesterone + oxidized [NADPH--hemoprotein reductase] + H2O + H(+). It catalyses the reaction pregnenolone + reduced [NADPH--hemoprotein reductase] + O2 = 17alpha-hydroxypregnenolone + oxidized [NADPH--hemoprotein reductase] + H2O + H(+). The enzyme catalyses 17alpha-hydroxyprogesterone + reduced [NADPH--hemoprotein reductase] + O2 = androst-4-ene-3,17-dione + acetate + oxidized [NADPH--hemoprotein reductase] + H2O + 2 H(+). It carries out the reaction 17alpha-hydroxyprogesterone + reduced [NADPH--hemoprotein reductase] + O2 = 16alpha,17alpha-dihydroxyprogesterone + oxidized [NADPH--hemoprotein reductase] + H2O + H(+). The catalysed reaction is 16alpha,17alpha-dihydroxyprogesterone + reduced [NADPH--hemoprotein reductase] + O2 = 6beta,16alpha,17alpha-trihydroxyprogesterone + oxidized [NADPH--hemoprotein reductase] + H2O + H(+). It catalyses the reaction 17alpha-hydroxypregnenolone + reduced [NADPH--hemoprotein reductase] + O2 = 3beta-hydroxyandrost-5-en-17-one + acetate + oxidized [NADPH--hemoprotein reductase] + H2O + 2 H(+). The enzyme catalyses 16alpha,17alpha-dihydroxypregnenolone + reduced [NADPH--hemoprotein reductase] + O2 = 3beta,16alpha-dihydroxy-androst-5-en-17-one + acetate + oxidized [NADPH--hemoprotein reductase] + H2O + 2 H(+). It carries out the reaction 3beta-hydroxyandrost-5-en-17-one + reduced [NADPH--hemoprotein reductase] + O2 = 3beta,16alpha-dihydroxy-androst-5-en-17-one + oxidized [NADPH--hemoprotein reductase] + H2O + H(+). The catalysed reaction is androst-4-ene-3,17-dione + reduced [NADPH--hemoprotein reductase] + O2 = 16alpha-hydroxyandrost-4-ene-3,17-dione + oxidized [NADPH--hemoprotein reductase] + H2O + H(+). The protein operates within steroid hormone biosynthesis. It functions in the pathway steroid biosynthesis; glucocorticoid biosynthesis. Its activity is regulated as follows. Regulated predominantly by intracellular cAMP levels. The 17,20-lyase activity is stimulated by cytochrome b5, which acts as an allosteric effector increasing the Vmax of the lyase activity. A cytochrome P450 monooxygenase involved in corticoid and androgen biosynthesis. Catalyzes 17-alpha hydroxylation of C21 steroids, which is common for both pathways. A second oxidative step, required only for androgen synthesis, involves an acyl-carbon cleavage. The 17-alpha hydroxy intermediates, as part of adrenal glucocorticoids biosynthesis pathway, are precursors of cortisol. Hydroxylates steroid hormones, pregnenolone and progesterone to form 17-alpha hydroxy metabolites, followed by the cleavage of the C17-C20 bond to form C19 steroids, dehydroepiandrosterone (DHEA) and androstenedione. Has 16-alpha hydroxylase activity. Catalyzes 16-alpha hydroxylation of 17-alpha hydroxy pregnenolone, followed by the cleavage of the C17-C20 bond to form 16-alpha-hydroxy DHEA. Also 16-alpha hydroxylates androgens, relevant for estriol synthesis. Mechanistically, uses molecular oxygen inserting one oxygen atom into a substrate, and reducing the second into a water molecule, with two electrons provided by NADPH via cytochrome P450 reductase (CPR; NADPH-ferrihemoprotein reductase). This chain is Steroid 17-alpha-hydroxylase/17,20 lyase (CYP17A1), found in Sus scrofa (Pig).